The chain runs to 364 residues: Lipid-A-disaccharide synthase (364 aa).

It belongs to the LpxB family.

It catalyses the reaction a lipid X + a UDP-2-N,3-O-bis[(3R)-3-hydroxyacyl]-alpha-D-glucosamine = a lipid A disaccharide + UDP + H(+). It functions in the pathway bacterial outer membrane biogenesis; LPS lipid A biosynthesis. Condensation of UDP-2,3-diacylglucosamine and 2,3-diacylglucosamine-1-phosphate to form lipid A disaccharide, a precursor of lipid A, a phosphorylated glycolipid that anchors the lipopolysaccharide to the outer membrane of the cell. The polypeptide is Lipid-A-disaccharide synthase (Campylobacter jejuni (strain RM1221)).